The primary structure comprises 328 residues: D-cysteine desulfhydrase (328 aa).

Lys51 carries the N6-(pyridoxal phosphate)lysine modification.

This sequence belongs to the ACC deaminase/D-cysteine desulfhydrase family. Homodimer. Pyridoxal 5'-phosphate is required as a cofactor.

The enzyme catalyses D-cysteine + H2O = hydrogen sulfide + pyruvate + NH4(+) + H(+). Its function is as follows. Catalyzes the alpha,beta-elimination reaction of D-cysteine and of several D-cysteine derivatives. It could be a defense mechanism against D-cysteine. The protein is D-cysteine desulfhydrase of Escherichia fergusonii (strain ATCC 35469 / DSM 13698 / CCUG 18766 / IAM 14443 / JCM 21226 / LMG 7866 / NBRC 102419 / NCTC 12128 / CDC 0568-73).